The following is a 343-amino-acid chain: UDP-3-O-acylglucosamine N-acyltransferase (343 aa).

Histidine 245 acts as the Proton acceptor in catalysis.

Belongs to the transferase hexapeptide repeat family. LpxD subfamily. As to quaternary structure, homotrimer.

It catalyses the reaction a UDP-3-O-[(3R)-3-hydroxyacyl]-alpha-D-glucosamine + a (3R)-hydroxyacyl-[ACP] = a UDP-2-N,3-O-bis[(3R)-3-hydroxyacyl]-alpha-D-glucosamine + holo-[ACP] + H(+). It functions in the pathway bacterial outer membrane biogenesis; LPS lipid A biosynthesis. Functionally, catalyzes the N-acylation of UDP-3-O-acylglucosamine using 3-hydroxyacyl-ACP as the acyl donor. Is involved in the biosynthesis of lipid A, a phosphorylated glycolipid that anchors the lipopolysaccharide to the outer membrane of the cell. This Phenylobacterium zucineum (strain HLK1) protein is UDP-3-O-acylglucosamine N-acyltransferase.